The primary structure comprises 184 residues: Putative manganese efflux pump MntP (184 aa).

6 helical membrane passes run 5 to 25 (LISI…VSLT), 38 to 58 (ILYY…IGYI), 67 to 87 (VSTV…LNMI), 107 to 127 (LTLL…TFAL), 133 to 153 (LLPC…GIFI), and 164 to 184 (KFEI…LLGY).

This sequence belongs to the MntP (TC 9.B.29) family.

The protein resides in the cell membrane. Its function is as follows. Probably functions as a manganese efflux pump. The chain is Putative manganese efflux pump MntP from Methanobrevibacter smithii (strain ATCC 35061 / DSM 861 / OCM 144 / PS).